Consider the following 397-residue polypeptide: Serpin B10 (397 aa).

The Nuclear localization signal signature appears at 74-77; the sequence is KKRK.

Belongs to the serpin family. Ov-serpin subfamily.

It localises to the nucleus. The protein resides in the cytoplasm. Protease inhibitor that may play a role in the regulation of protease activities during hematopoiesis and apoptosis induced by TNF. May regulate protease activities in the cytoplasm and in the nucleus. This is Serpin B10 (SERPINB10) from Plecturocebus moloch (Dusky titi monkey).